Reading from the N-terminus, the 279-residue chain is Protein phosphatase 1 regulatory subunit 3E (279 aa).

Residues S16 and S33 each carry the phosphoserine modification. Positions 28-89 (RSQRPSLEEE…RSPDTRKRVR (62 aa)) are disordered. Basic residues predominate over residues 51–65 (ARSRAHVPGRGRRAR). Position 66 is a phosphoserine (S66). Positions 87-90 (RVRF) match the PP1-binding motif motif. Residues 154–259 (AARLQAQRIC…NNGGRDYALL (106 aa)) form the CBM21 domain. Residues 176–198 (GSARVLDLAYEKRVSVRWSADGW) form a glycogen-binding motif region. Positions 248–256 (WDNNGGRDY) are substrate-binding motif.

In terms of tissue distribution, expressed in liver and heart, with low levels in skeletal muscle.

Functionally, acts as a glycogen-targeting subunit for PP1. PP1 is involved in glycogen metabolism and contributes to the activation of glycogen synthase leading to an increase in glycogen synthesis. This is Protein phosphatase 1 regulatory subunit 3E (Ppp1r3e) from Rattus norvegicus (Rat).